Reading from the N-terminus, the 682-residue chain is Protein SPT2 homolog (682 aa).

The tract at residues 1-569 (MDFREILLIA…PLLSGYRSAQ (569 aa)) is important for interaction with DNA. Lys37 participates in a covalent cross-link: Glycyl lysine isopeptide (Lys-Gly) (interchain with G-Cter in SUMO2). Residues 46 to 82 (AFLRRKEEELRQKALEEKKRKEELVKKRIELKHDKKA) are a coiled coil. The disordered stretch occupies residues 80-170 (KKARAMAKRT…SAPSPMNFTD (91 aa)). Positions 101–111 (VEEKTKKKQLV) are enriched in basic and acidic residues. Residues 121–131 (QEYDVEEEDFI) are compositionally biased toward acidic residues. Low complexity predominate over residues 156 to 165 (KAPLKSAPSP). Lys186 is covalently cross-linked (Glycyl lysine isopeptide (Lys-Gly) (interchain with G-Cter in SUMO2)). Residues 187–208 (VVKKAEDRPLTAEELREREFLE) are compositionally biased toward basic and acidic residues. Disordered regions lie at residues 187–533 (VVKK…TKPR) and 549–595 (RSSN…DEYD). Polar residues-rich tracts occupy residues 267–280 (STAS…SSPK), 317–334 (STCS…TQKS), 371–393 (PGSN…TLSS), 400–409 (QNGSSSSGPE), and 419–432 (ASNS…LNGT). At Ser277 the chain carries Phosphoserine. 2 stretches are compositionally biased toward low complexity: residues 435–460 (PGRP…RPVG) and 490–504 (SGPG…PAGR). The segment at 570–682 (GPQRLPFPTG…RRKAKKLKRH (113 aa)) is important for interaction with histones. An N6-acetyllysine modification is found at Lys581. The segment covering 586–595 (YEEDDDDEYD) has biased composition (acidic residues). Phosphoserine is present on Ser596. Basic and acidic residues-rich tracts occupy residues 641–652 (SWKEQQKEEAKS) and 663–672 (EMRREEEELK). Residues 641–682 (SWKEQQKEEAKSLRLGMQEDLEEMRREEEELKRRKAKKLKRH) are disordered. A coiled-coil region spans residues 642-682 (WKEQQKEEAKSLRLGMQEDLEEMRREEEELKRRKAKKLKRH). The segment covering 673-682 (RRKAKKLKRH) has biased composition (basic residues).

It belongs to the SPT2 family. Interacts with histones. Interacts with a heterotetrameric complex formed by histone H3 and H4, especially when the histone tetramer is not bound to DNA. Interacts with histone H3.3.

It localises to the nucleus. Its subcellular location is the nucleolus. Functionally, histone chaperone that stabilizes pre-existing histone tetramers and regulates replication-independent histone exchange on chromatin. Required for normal chromatin refolding in the coding region of transcribed genes, and for the suppression of spurious transcription. Binds DNA and histones and promotes nucleosome assembly (in vitro). Facilitates formation of tetrameric histone complexes containing histone H3 and H4. Modulates RNA polymerase 1-mediated transcription. Binds DNA, with a preference for branched DNA species, such as Y-form DNA and Holliday junction DNA. The protein is Protein SPT2 homolog (Spty2d1) of Mus musculus (Mouse).